A 205-amino-acid polypeptide reads, in one-letter code: Phosphoribosyl-dephospho-CoA transferase (205 aa).

Residues aspartate 134 and aspartate 136 contribute to the active site.

Belongs to the MdcG family.

It catalyses the reaction apo-[malonate decarboxylase ACP] + 2'-(5''-triphospho-alpha-D-ribosyl)-3'-dephospho-CoA = holo-[malonate decarboxylase ACP] + diphosphate. Its function is as follows. Transfers 2'-(5-triphosphoribosyl)-3'-dephosphocoenzyme-A to the apo-[acyl-carrier-protein] of the malonate decarboxylase to yield holo-[acyl-carrier-protein]. The protein is Phosphoribosyl-dephospho-CoA transferase of Klebsiella pneumoniae subsp. pneumoniae (strain ATCC 700721 / MGH 78578).